The sequence spans 81 residues: Delta-actitoxin-Aeq2d (81 aa).

A signal peptide spans 1 to 19 (MNRLMILVFAAVILALASA). The propeptide occupies 20–25 (DDVDIA). Intrachain disulfides connect Cys-31–Cys-78, Cys-33–Cys-68, and Cys-61–Cys-79.

Belongs to the sea anemone sodium channel inhibitory toxin family. Type I subfamily.

It localises to the secreted. The protein localises to the nematocyst. Binds specifically to voltage-gated sodium channels (Nav), thereby delaying their inactivation during signal transduction. Causes death to crabs. This chain is Delta-actitoxin-Aeq2d, found in Actinia equina (Beadlet anemone).